Consider the following 3430-residue polypeptide: MSKKPGGPGKNRAVNMLKRGMPRGLSLIGLKRAMLSLIDGKGPIRFVLALLAFFRFTAIAPTRAVLDRWRGVNKQTAMKHLLSFKKELGTLTSAINRRSTKQKKRGGTAGFTILLGLIACAGAVTLSNFQGKVMMTVNATDVTDVITIPTAAGKNLCIVRAMDVGYLCEDTITYECPVLAAGNDPEDIDCWCTKSSVYVRYGRCTKTRHSRRSRRSLTVQTHGESTLANKKGAWLDSTKATRYLVKTESWILRNPGYALVAAVIGWMLGSNTMQRVVFAILLLLVAPAYSFNCLGMSNRDFLEGVSGATWVDLVLEGDSCVTIMSKDKPTIDVKMMNMEAANLADVRSYCYLASVSDLSTRAACPTMGEAHNEKRADPAFVCKQGVVDRGWGNGCGLFGKGSIDTCAKFACTTKATGWIIQKENIKYEVAIFVHGPTTVESHGKIGATQAGRFSITPSAPSYTLKLGEYGEVTVDCEPRSGIDTSAYYVMSVGEKSFLVHREWFMDLNLPWSSAGSTTWRNRETLMEFEEPHATKQSVVALGSQEGALHQALAGAIPVEFSSNTVKLTSGHLKCRVKMEKLQLKGTTYGVCSKAFKFARTPADTGHGTVVLELQYTGTDGPCKVPISSVASLNDLTPVGRLVTVNPFVSVATANSKVLIELEPPFGDSYIVVGRGEQQINHHWHKSGSSIGKAFTTTLRGAQRLAALGDTAWDFGSVGGVFTSVGKAIHQVFGGAFRSLFGGMSWITQGLLGALLLWMGINARDRSIAMTFLAVGGVLLFLSVNVHADTGCAIDIGRQELRCGSGVFIHNDVEAWMDRYKFYPETPQGLAKIIQKAHAEGVCGLRSVSRLEHQMWEAIKDELNTLLKENGVDLSVVVEKQNGMYKAAPKRLAATTEKLEMGWKAWGKSIIFAPELANNTFVIDGPETEECPTANRAWNSMEVEDFGFGLTSTRMFLRIRETNTTECDSKIIGTAVKNNMAVHSDLSYWIESGLNDTWKLERAVLGEVKSCTWPETHTLWGDGVLESDLIIPITLAGPRSNHNRRPGYKTQNQGPWDEGRVEIDFDYCPGTTVTISDSCEHRGPAARTTTESGKLITDWCCRSCTLPPLRFQTENGCWYGMEIRPTRHDEKTLVQSRVNAYNADMIDPFQLGLMVVFLATQEVLRKRWTAKISIPAIMLALLVLVFGGITYTDVLRYVILVGAAFAEANSGGDVVHLALMATFKIQPVFLVASFLKARWTNQESILLMLAAAFFQMAYYDAKNVLSWEVPDVLNSLSVAWMILRAISFTNTSNVVVPLLALLTPGLKCLNLDVYRILLLMVGVGSLIKEKRSSAAKKKGACLICLALASTGVFNPMILAAGLMACDPNRKRGWPATEVMTAVGLMFAIVGGLAELDIDSMAIPMTIAGLMFAAFVISGKSTDMWIERTADITWESDAEITGSSERVDVRLDDDGNFQLMNDPGAPWKIWMLRMACLAISAYTPWAILPSVIGFWITLQYTKRGGVLWDTPSPKEYKKGDTTTGVYRIMTRGLLGSYQAGAGVMVEGVFHTLWHTTKGAALMSGEGRLDPYWGSVKEDRLCYGGPWKLQHKWNGHDEVQMIVVEPGKNVKNVQTKPGVFKTPEGEIGAVTLDYPTGTSGSPIVDKNGDVIGLYGNGVIMPNGSYISAIVQGERMEEPAPAGFEPEMLRKKQITVLDLHPGAGKTRKILPQIIKEAINKRLRTAVLAPTRVVAAEMSEALRGLPIRYQTSAVHREHSGNEIVDVMCHATLTHRLMSPHRVPNYNLFIMDEAHFTDPASIAARGYIATKVELGEAAAIFMTATPPGTSDPFPESNAPISDMQTEIPDRAWNTGYEWITEYVGKTVWFVPSVKMGNEIALCLQRAGKKVIQLNRKSYETEYPKCKNDDWDFVITTDISEMGANFKASRVIDSRKSVKPTIIEEGDGRVILGEPSAITAASAAQRRGRIGRNPSQVGDEYCYGGHTNEDDSNFAHWTEARIMLDNINMPNGLVAQLYQPEREKVYTMDGEYRLRGEERKNFLEFLRTADLPVWLAYKVAAAGISYHDRKWCFDGPRTNTILEDNNEVEVITKLGERKILRPRWADARVYSDHQALKSFKDFASGKRSQIGLVEVLGRMPEHFMVKTWEALDTMYVVATAEKGGRAHRMALEELPDALQTIVLIALLSVMSLGVFFLLMQRKGIGKIGLGGVILGAATFFCWMAEVPGTKIAGMLLLSLLLMIVLIPEPEKQRSQTDNQLAVFLICVLTLVGAVAANEMGWLDKTKNDIGSLLGHRPEARETTLGVESFLLDLRPATAWSLYAVTTAVLTPLLKHLITSDYINTSLTSINVQASALFTLARGFPFVDVGVSALLLAVGCWGQVTLTVTVTAAALLFCHYAYMVPGWQAEAMRSAQRRTAAGIMKNVVVDGIVATDVPELERTTPVMQKKVGQIILILVSMAAVVVNPSVRTVREAGILTTAAAVTLWENGASSVWNATTAIGLCHIMRGGWLSCLSIMWTLIKNMEKPGLKRGGAKGRTLGEVWKERLNHMTKEEFTRYRKEAITEVDRSAAKHARREGNITGGHPVSRGTAKLRWLVERRFLEPVGKVVDLGCGRGGWCYYMATQKRVQEVKGYTKGGPGHEEPQLVQSYGWNIVTMKSGVDVFYRPSEASDTLLCDIGESSSSAEVEEHRTVRVLEMVEDWLHRGPKEFCIKVLCPYMPKVIEKMETLQRRYGGGLIRNPLSRNSTHEMYWVSHASGNIVHSVNMTSQVLLGRMEKKTWKGPQFEEDVNLGSGTRAVGKPLLNSDTSKIKNRIERLKKEYSSTWHQDANHPYRTWNYHGSYEVKPTGSASSLVNGVVRLLSKPWDTITNVTTMAMTDTTPFGQQRVFKEKVDTKAPEPPEGVKYVLNETTNWLWAFLARDKKPRMCSREEFIGKVNSNAALGAMFEEQNQWKNAREAVEDPKFWEMVDEEREAHLRGECNTCIYNMMGKREKKPGEFGKAKGSRAIWFMWLGARFLEFEALGFLNEDHWLGRKNSGGGVEGLGLQKLGYILKEVGTKPGGKVYADDTAGWDTRITKADLENEAKVLELLDGEHRRLARSIIELTYRHKVVKVMRPAADGKTVMDVISREDQRGSGQVVTYALNTFTNLAVQLVRMMEGEGVIGPDDVEKLGKGKGPKVRTWLFENGEERLSRMAVSGDDCVVKPLDDRFATSLHFLNAMSKVRKDIQEWKPSTGWYDWQQVPFCSNHFTELIMKDGRTLVVPCRGQDELIGRARISPGAGWNVRDTACLAKSYAQMWLLLYFHRRDLRLMANAICSAVPANWVPTGRTTWSIHAKGEWMTTEDMLAVWNRVWIEENEWMEDKTPVERWSDVPYSGKREDIWCGSLIGTRTRATWAENIHVAINQVRSVIGEEKYVDYMSSLRRYEDTIVVEDTVL.

Residues 2–15 (SKKPGGPGKNRAVN) are interaction with host EXOC1. At 2–105 (SKKPGGPGKN…NRRSTKQKKR (104 aa)) the chain is on the cytoplasmic side. The interval 37 to 72 (LIDGKGPIRFVLALLAFFRFTAIAPTRAVLDRWRGV) is hydrophobic; homodimerization of capsid protein C. Positions 106–123 (GGTAGFTILLGLIACAGA) are cleaved as a propeptide — ER anchor for the capsid protein C, removed in mature form by serine protease NS3. The helical transmembrane segment at 106–126 (GGTAGFTILLGLIACAGAVTL) threads the bilayer. Residues 127 to 248 (SNFQGKVMMT…KATRYLVKTE (122 aa)) lie on the Extracellular side of the membrane. The N-linked (GlcNAc...) asparagine; by host glycan is linked to N138. The chain crosses the membrane as a helical span at residues 249-269 (SWILRNPGYALVAAVIGWMLG). Over 270–275 (SNTMQR) the chain is Cytoplasmic. Residues 276–290 (VVFAILLLLVAPAYS) traverse the membrane as a helical segment. Topologically, residues 291–739 (FNCLGMSNRD…QVFGGAFRSL (449 aa)) are extracellular. Cystine bridges form between C293/C320, C350/C406, C364/C395, C382/C411, C476/C574, and C591/C622. Residues 388–401 (DRGWGNGCGLFGKG) form a fusion peptide region. Residues 740-760 (FGGMSWITQGLLGALLLWMGI) form a helical membrane-spanning segment. Topologically, residues 761 to 766 (NARDRS) are cytoplasmic. The helical transmembrane segment at 767 to 787 (IAMTFLAVGGVLLFLSVNVHA) threads the bilayer. Residues 788-1212 (DTGCAIDIGR…AFAEANSGGD (425 aa)) are Extracellular-facing. 2 cysteine pairs are disulfide-bonded: C791–C802 and C842–C930. N-linked (GlcNAc...) asparagine; by host glycosylation is found at N917, N962, and N994. 4 disulfides stabilise this stretch: C966/C1010, C1067/C1116, C1078/C1099, and C1100/C1103. The helical transmembrane segment at 1213-1233 (VVHLALMATFKIQPVFLVASF) threads the bilayer. Residues 1234 to 1243 (LKARWTNQES) are Cytoplasmic-facing. The chain crosses the membrane as a helical span at residues 1244–1264 (ILLMLAAAFFQMAYYDAKNVL). Residues 1265 to 1278 (SWEVPDVLNSLSVA) are Lumenal-facing. The chain crosses the membrane as a helical span at residues 1279 to 1299 (WMILRAISFTNTSNVVVPLLA). Residues 1300 to 1307 (LLTPGLKC) lie on the Cytoplasmic side of the membrane. Residues 1308-1328 (LNLDVYRILLLMVGVGSLIKE) form a helical membrane-spanning segment. Residues 1329–1340 (KRSSAAKKKGAC) are Lumenal-facing. The chain crosses the membrane as a helical span at residues 1341–1361 (LICLALASTGVFNPMILAAGL). The Cytoplasmic segment spans residues 1362–1371 (MACDPNRKRG). A helical membrane pass occupies residues 1372 to 1392 (WPATEVMTAVGLMFAIVGGLA). Residues 1393–1395 (ELD) are Lumenal-facing. The helical transmembrane segment at 1396–1416 (IDSMAIPMTIAGLMFAAFVIS) threads the bilayer. The Cytoplasmic segment spans residues 1417-1473 (GKSTDMWIERTADITWESDAEITGSSERVDVRLDDDGNFQLMNDPGAPWKIWMLRMA). The interval 1424–1463 (IERTADITWESDAEITGSSERVDVRLDDDGNFQLMNDPGA) is interacts with and activates NS3 protease. Residues 1474–1494 (CLAISAYTPWAILPSVIGFWI) constitute an intramembrane region (helical). The Cytoplasmic portion of the chain corresponds to 1495–2170 (TLQYTKRGGV…RMALEELPDA (676 aa)). The region spanning 1502–1679 (GGVLWDTPSP…ERMEEPAPAG (178 aa)) is the Peptidase S7 domain. Active-site charge relay system; for serine protease NS3 activity residues include H1552, D1576, and S1636. The region spanning 1682–1838 (PEMLRKKQIT…ESNAPISDMQ (157 aa)) is the Helicase ATP-binding domain. The interval 1686–1689 (RKKQ) is important for RNA-binding. Residue 1695-1702 (LHPGAGKT) participates in ATP binding. A DEAH box motif is present at residues 1786–1789 (DEAH). In terms of domain architecture, Helicase C-terminal spans 1849–2014 (GYEWITEYVG…GLVAQLYQPE (166 aa)). K1890 is subject to N6-acetyllysine; by host. Positions 2165–2169 (EELPD) are regulates the ATPase activity of NS3 helicase. A helical transmembrane segment spans residues 2171 to 2191 (LQTIVLIALLSVMSLGVFFLL). The Lumenal portion of the chain corresponds to 2192–2196 (MQRKG). An intramembrane region (helical) is located at residues 2197 to 2217 (IGKIGLGGVILGAATFFCWMA). A topological domain (lumenal) is located at residue E2218. The helical transmembrane segment at 2219 to 2239 (VPGTKIAGMLLLSLLLMIVLI) threads the bilayer. The Cytoplasmic portion of the chain corresponds to 2240-2254 (PEPEKQRSQTDNQLA). The helical transmembrane segment at 2255 to 2275 (VFLICVLTLVGAVAANEMGWL) threads the bilayer. The Lumenal segment spans residues 2276 to 2309 (DKTKNDIGSLLGHRPEARETTLGVESFLLDLRPA). The helical intramembrane region spans 2310–2330 (TAWSLYAVTTAVLTPLLKHLI). The Lumenal portion of the chain corresponds to 2331–2377 (TSDYINTSLTSINVQASALFTLARGFPFVDVGVSALLLAVGCWGQVT). The chain crosses the membrane as a helical span at residues 2378–2398 (LTVTVTAAALLFCHYAYMVPG). Topologically, residues 2399–2441 (WQAEAMRSAQRRTAAGIMKNVVVDGIVATDVPELERTTPVMQK) are cytoplasmic. The chain crosses the membrane as a helical span at residues 2442–2462 (KVGQIILILVSMAAVVVNPSV). Over 2463–2467 (RTVRE) the chain is Lumenal. The chain crosses the membrane as a helical span at residues 2468–2488 (AGILTTAAAVTLWENGASSVW). The Cytoplasmic portion of the chain corresponds to 2489-3430 (NATTAIGLCH…DTIVVEDTVL (942 aa)). The mRNA cap 0-1 NS5-type MT domain occupies 2526–2791 (GGAKGRTLGE…DVNLGSGTRA (266 aa)). An S-adenosyl-L-methionine-binding site is contributed by S2581. Position 2581 is a phosphoserine (S2581). The active-site For 2'-O-MTase activity is the K2586. The S-adenosyl-L-methionine site is built by G2611, W2612, T2629, K2630, D2656, and V2657. The active-site For 2'-O-MTase activity is D2671. Position 2672 (I2672) interacts with S-adenosyl-L-methionine. Residues K2707 and E2743 each act as for 2'-O-MTase activity in the active site. S-adenosyl-L-methionine is bound at residue Y2745. The Nuclear localization signal motif lies at 2914-2916 (RDK). Zn(2+)-binding residues include E2965, H2969, C2974, and C2977. Residues 3055–3207 (GKVYADDTAG…KPLDDRFATS (153 aa)) form the RdRp catalytic domain. Zn(2+)-binding residues include H3242, C3258, and C3377. The PDZ-binding signature appears at 3428-3430 (TVL).

It in the N-terminal section; belongs to the class I-like SAM-binding methyltransferase superfamily. mRNA cap 0-1 NS5-type methyltransferase family. Homodimer. Interacts (via N-terminus) with host EXOC1 (via C-terminus); this interaction results in EXOC1 degradation through the proteasome degradation pathway. Interacts with host DDX56; this interaction plays an important role in genomic RNA encapsidation. In terms of assembly, forms heterodimers with envelope protein E in the endoplasmic reticulum and Golgi. As to quaternary structure, homodimer; in the endoplasmic reticulum and Golgi. Homodimer; Homohexamer when secreted. Interacts with envelope protein E. NS1 interacts with NS4B. Interacts with host complement protein CFH; this interaction leads to the degradation of C3. In terms of assembly, interacts (via N-terminus) with serine protease NS3. As to quaternary structure, forms a heterodimer with serine protease NS3. May form homooligomers. Forms a heterodimer with NS2B. Interacts with NS4B. Interacts with unphosphorylated RNA-directed RNA polymerase NS5; this interaction stimulates RNA-directed RNA polymerase NS5 guanylyltransferase activity. In terms of assembly, interacts with Serine protease/Helicase NS3. Interacts with NS1. As to quaternary structure, homodimer. Interacts with host STAT2; this interaction inhibits the phosphorylation of the latter, and, when all viral proteins are present (polyprotein), targets STAT2 for degradation. Interacts with host PAF1 complex. Post-translationally, specific enzymatic cleavages in vivo yield mature proteins. Cleavages in the lumen of endoplasmic reticulum are performed by host signal peptidase, whereas cleavages in the cytoplasmic side are performed by serine protease NS3. Signal cleavage at the 2K-4B site requires a prior NS3 protease-mediated cleavage at the 4A-2K site. Cleaved in post-Golgi vesicles by a host furin, releasing the mature small envelope protein M, and peptide pr. This cleavage is incomplete as up to 30% of viral particles still carry uncleaved prM. In terms of processing, not N-glycosylated. Post-translationally, N-glycosylated. The excreted form is glycosylated and this is required for efficient secretion of the protein from infected cells. Acetylated by host KAT5. Acetylation modulates NS3 RNA-binding and unwinding activities and plays an important positive role for viral replication. In terms of processing, phosphorylated on serines residues. This phosphorylation may trigger NS5 nuclear localization.

Its subcellular location is the virion. The protein localises to the host nucleus. The protein resides in the host cytoplasm. It is found in the host perinuclear region. It localises to the secreted. Its subcellular location is the virion membrane. The protein localises to the host endoplasmic reticulum membrane. It carries out the reaction Selective hydrolysis of -Xaa-Xaa-|-Yaa- bonds in which each of the Xaa can be either Arg or Lys and Yaa can be either Ser or Ala.. The catalysed reaction is RNA(n) + a ribonucleoside 5'-triphosphate = RNA(n+1) + diphosphate. The enzyme catalyses a ribonucleoside 5'-triphosphate + H2O = a ribonucleoside 5'-diphosphate + phosphate + H(+). It catalyses the reaction ATP + H2O = ADP + phosphate + H(+). It carries out the reaction a 5'-end (5'-triphosphoguanosine)-ribonucleoside in mRNA + S-adenosyl-L-methionine = a 5'-end (N(7)-methyl 5'-triphosphoguanosine)-ribonucleoside in mRNA + S-adenosyl-L-homocysteine. The catalysed reaction is a 5'-end (N(7)-methyl 5'-triphosphoguanosine)-ribonucleoside in mRNA + S-adenosyl-L-methionine = a 5'-end (N(7)-methyl 5'-triphosphoguanosine)-(2'-O-methyl-ribonucleoside) in mRNA + S-adenosyl-L-homocysteine + H(+). Its function is as follows. Plays a role in virus budding by binding to the cell membrane and gathering the viral RNA into a nucleocapsid that forms the core of a mature virus particle. During virus entry, may induce genome penetration into the host cytoplasm after hemifusion induced by the surface proteins. Can migrate to the cell nucleus where it modulates host functions. Overcomes the anti-viral effects of host EXOC1 by sequestering and degrading the latter through the proteasome degradation pathway. In terms of biological role, inhibits RNA silencing by interfering with host Dicer. Prevents premature fusion activity of envelope proteins in trans-Golgi by binding to envelope protein E at pH6.0. After virion release in extracellular space, gets dissociated from E dimers. Functionally, acts as a chaperone for envelope protein E during intracellular virion assembly by masking and inactivating envelope protein E fusion peptide. prM is the only viral peptide matured by host furin in the trans-Golgi network probably to avoid catastrophic activation of the viral fusion activity in acidic Golgi compartment prior to virion release. prM-E cleavage is inefficient, and many virions are only partially matured. These uncleaved prM would play a role in immune evasion. Its function is as follows. May play a role in virus budding. Exerts cytotoxic effects by activating a mitochondrial apoptotic pathway through M ectodomain. May display a viroporin activity. In terms of biological role, binds to host cell surface receptor and mediates fusion between viral and cellular membranes. Envelope protein is synthesized in the endoplasmic reticulum in the form of heterodimer with protein prM. They play a role in virion budding in the ER, and the newly formed immature particle is covered with 60 spikes composed of heterodimer between precursor prM and envelope protein E. The virion is transported to the Golgi apparatus where the low pH causes dissociation of PrM-E heterodimers and formation of E homodimers. prM-E cleavage is inefficient, and many virions are only partially matured. These uncleaved prM would play a role in immune evasion. Involved in immune evasion, pathogenesis and viral replication. Once cleaved off the polyprotein, is targeted to three destinations: the viral replication cycle, the plasma membrane and the extracellular compartment. Essential for viral replication. Required for formation of the replication complex and recruitment of other non-structural proteins to the ER-derived membrane structures. Excreted as a hexameric lipoparticle that plays a role against host immune response. Antagonizing the complement function. Binds to the host macrophages and dendritic cells. Inhibits signal transduction originating from Toll-like receptor 3 (TLR3). Functionally, component of the viral RNA replication complex that functions in virion assembly and antagonizes the host alpha/beta interferon antiviral response. Its function is as follows. Required cofactor for the serine protease function of NS3. May have membrane-destabilizing activity and form viroporins. In terms of biological role, displays three enzymatic activities: serine protease, NTPase and RNA helicase. NS3 serine protease, in association with NS2B, performs its autocleavage and cleaves the polyprotein at dibasic sites in the cytoplasm: C-prM, NS2A-NS2B, NS2B-NS3, NS3-NS4A, NS4A-2K and NS4B-NS5. NS3 RNA helicase binds RNA and unwinds dsRNA in the 3' to 5' direction. NS3 supports the separation of RNA daughter and template strands during viral replication. The helicase part is involved in the inhibition of phosphorylation of host STAT1, and thereby inhibition of host type-I IFN signaling. In addition, NS3 assists the initiation of replication by unwinding the RNA secondary structure in the 3' non-translated region (NTR). Inhibits STAT2 translocation in the nucleus after IFN-alpha treatment. Regulates the ATPase activity of the NS3 helicase activity. NS4A allows NS3 helicase to conserve energy during unwinding. Functionally, functions as a signal peptide for NS4B and is required for the interferon antagonism activity of the latter. Its function is as follows. Induces the formation of ER-derived membrane vesicles where the viral replication takes place. Inhibits interferon (IFN)-induced host STAT1 phosphorylation and nuclear translocation, thereby preventing the establishment of cellular antiviral state by blocking the IFN-alpha/beta pathway. Inhibits STAT2 translocation in the nucleus after IFN-alpha treatment. In terms of biological role, replicates the viral (+) and (-) RNA genome, and performs the capping of genomes in the cytoplasm. NS5 methylates viral RNA cap at guanine N-7 and ribose 2'-O positions. Besides its role in RNA genome replication, also prevents the establishment of cellular antiviral state by blocking the interferon-alpha/beta (IFN-alpha/beta) signaling pathway. Inhibits host TYK2 and STAT2 phosphorylation, thereby preventing activation of JAK-STAT signaling pathway. This is Genome polyprotein from Aedes (Tropical bont tick).